The following is a 186-amino-acid chain: ATP synthase subunit delta (186 aa).

The protein belongs to the ATPase delta chain family. In terms of assembly, F-type ATPases have 2 components, F(1) - the catalytic core - and F(0) - the membrane proton channel. F(1) has five subunits: alpha(3), beta(3), gamma(1), delta(1), epsilon(1). F(0) has three main subunits: a(1), b(2) and c(10-14). The alpha and beta chains form an alternating ring which encloses part of the gamma chain. F(1) is attached to F(0) by a central stalk formed by the gamma and epsilon chains, while a peripheral stalk is formed by the delta and b chains.

It localises to the cell inner membrane. F(1)F(0) ATP synthase produces ATP from ADP in the presence of a proton or sodium gradient. F-type ATPases consist of two structural domains, F(1) containing the extramembraneous catalytic core and F(0) containing the membrane proton channel, linked together by a central stalk and a peripheral stalk. During catalysis, ATP synthesis in the catalytic domain of F(1) is coupled via a rotary mechanism of the central stalk subunits to proton translocation. In terms of biological role, this protein is part of the stalk that links CF(0) to CF(1). It either transmits conformational changes from CF(0) to CF(1) or is implicated in proton conduction. In Mesorhizobium japonicum (strain LMG 29417 / CECT 9101 / MAFF 303099) (Mesorhizobium loti (strain MAFF 303099)), this protein is ATP synthase subunit delta.